Here is a 217-residue protein sequence, read N- to C-terminus: Protein-L-isoaspartate O-methyltransferase 2 (217 aa).

The active site involves Ser62.

It belongs to the methyltransferase superfamily. L-isoaspartyl/D-aspartyl protein methyltransferase family.

The protein localises to the cytoplasm. The catalysed reaction is [protein]-L-isoaspartate + S-adenosyl-L-methionine = [protein]-L-isoaspartate alpha-methyl ester + S-adenosyl-L-homocysteine. In terms of biological role, catalyzes the methyl esterification of L-isoaspartyl residues in peptides and proteins that result from spontaneous decomposition of normal L-aspartyl and L-asparaginyl residues. It plays a role in the repair and/or degradation of damaged proteins. This is Protein-L-isoaspartate O-methyltransferase 2 from Geotalea uraniireducens (strain Rf4) (Geobacter uraniireducens).